The chain runs to 139 residues: Gastrula zinc finger protein XlCGF29.1 (139 aa).

C2H2-type zinc fingers lie at residues 6–28 (FTCT…LLIH), 34–56 (FDST…LSTH), 62–84 (FVCT…LHSH), 90–112 (FPCS…LRHH), and 117–139 (FPCT…QMIH).

This sequence belongs to the krueppel C2H2-type zinc-finger protein family.

It localises to the nucleus. In terms of biological role, may be involved in transcriptional regulation. The chain is Gastrula zinc finger protein XlCGF29.1 from Xenopus laevis (African clawed frog).